Consider the following 398-residue polypeptide: Phosphoglycerate kinase (398 aa).

Substrate is bound by residues 21 to 23 (DFN), Arg-36, 59 to 62 (HLGR), Arg-119, and Arg-157. Residues Lys-208, Gly-296, Glu-327, and 354-357 (GGDS) each bind ATP.

It belongs to the phosphoglycerate kinase family. In terms of assembly, monomer.

Its subcellular location is the cytoplasm. The catalysed reaction is (2R)-3-phosphoglycerate + ATP = (2R)-3-phospho-glyceroyl phosphate + ADP. Its pathway is carbohydrate degradation; glycolysis; pyruvate from D-glyceraldehyde 3-phosphate: step 2/5. The protein is Phosphoglycerate kinase of Streptococcus pneumoniae serotype 2 (strain D39 / NCTC 7466).